Here is a 338-residue protein sequence, read N- to C-terminus: Cytoskeleton protein RodZ (338 aa).

The Cytoplasmic portion of the chain corresponds to 1–111; it reads MNTEATHDQN…LGKRRKKRDG (111 aa). Residues 19 to 71 enclose the HTH cro/C1-type domain; sequence LRNAREQLGLSQQAVAERLCLKVSTVRDIEEDKAPADLASTFLRGYIRSYARL. The segment at residues 30–49 is a DNA-binding region (H-T-H motif); it reads QQAVAERLCLKVSTVRDIEE. The chain crosses the membrane as a helical; Signal-anchor for type II membrane protein span at residues 112 to 132; it reads WLMTFTWLVLFVVIGLSGAWW. Residues 133 to 338 lie on the Periplasmic side of the membrane; the sequence is WQDHKAQQEE…TLNAEQSPAQ (206 aa). Polar residues predominate over residues 155–169; the sequence is NANGTNSQSIPLENS. A disordered region spans residues 155–240; the sequence is NANGTNSQSI…TTPDTATPLP (86 aa). Over residues 170-188 the composition is skewed to low complexity; it reads TTTVPEATPAPAAPVDTTA. Residues 203 to 217 show a composition bias toward polar residues; that stretch reads EPQQNAVVPPSQANV. Residues 218-240 are compositionally biased toward low complexity; sequence DTATTAPAAPATTTTPDTATPLP.

This sequence belongs to the RodZ family.

Its subcellular location is the cell inner membrane. In terms of biological role, cytoskeletal protein that is involved in cell-shape control through regulation of the length of the long axis. The protein is Cytoskeleton protein RodZ of Escherichia fergusonii (strain ATCC 35469 / DSM 13698 / CCUG 18766 / IAM 14443 / JCM 21226 / LMG 7866 / NBRC 102419 / NCTC 12128 / CDC 0568-73).